A 151-amino-acid polypeptide reads, in one-letter code: MSAIPPTSNGWLRKMQLGQQYMKTWPIEKQLAPMFPENRIIKATRFGIRFMPPLAIFTLTWQIALGGQLGPAVATALFACSLPMQGLWWLGKRASTPLPAALLKWFHEIRDKFAAAGITMAPVQQTPTYQSLAELLKRAFKQLDRSFLDDI.

The next 2 membrane-spanning stretches (helical) occupy residues 46–65 (FGIR…QIAL) and 69–91 (LGPA…WWLG).

The protein belongs to the UPF0208 family.

It localises to the cell inner membrane. This Photorhabdus laumondii subsp. laumondii (strain DSM 15139 / CIP 105565 / TT01) (Photorhabdus luminescens subsp. laumondii) protein is UPF0208 membrane protein plu3094.